Reading from the N-terminus, the 288-residue chain is HTH-type transcriptional regulator CzcR (288 aa).

Residues 1 to 58 (MELRDLQIFQSVADQGSVSSAAKELNYVQSNVTARIKQLENELKTPLFYRHKRGMTLT) enclose the HTH lysR-type domain. Residues 18 to 37 (VSSAAKELNYVQSNVTARIK) constitute a DNA-binding region (H-T-H motif).

The protein belongs to the LysR transcriptional regulatory family.

This Bacillus anthracis protein is HTH-type transcriptional regulator CzcR (czcR).